The following is a 181-amino-acid chain: Adenylate kinase (181 aa).

Residue 10-15 (GAGKGT) coordinates ATP. Positions 30–59 (STGDLFRANIGQATALGVEAKKYIDAGELV) are NMP. AMP contacts are provided by residues threonine 31, arginine 36, 57-59 (ELV), 85-88 (GFPR), and glutamine 92. Residues 126–132 (ARGRADD) are LID. Arginine 127 lines the ATP pocket. The AMP site is built by arginine 129 and arginine 140. Glycine 166 provides a ligand contact to ATP.

This sequence belongs to the adenylate kinase family. In terms of assembly, monomer.

The protein resides in the cytoplasm. It carries out the reaction AMP + ATP = 2 ADP. Its pathway is purine metabolism; AMP biosynthesis via salvage pathway; AMP from ADP: step 1/1. In terms of biological role, catalyzes the reversible transfer of the terminal phosphate group between ATP and AMP. Plays an important role in cellular energy homeostasis and in adenine nucleotide metabolism. The protein is Adenylate kinase of Rhodococcus erythropolis (strain PR4 / NBRC 100887).